A 304-amino-acid chain; its full sequence is Chromo domain-containing protein cec-1 (304 aa).

Residues Tyr8 to Lys66 form the Chromo domain. Positions Ala63–Ala73 are enriched in basic and acidic residues. Disordered regions lie at residues Ala63–Leu235 and Val248–Glu304. Residues Gly75–Ala102 show a composition bias toward low complexity. Basic residues predominate over residues Pro106–Arg116. The span at Ile122–Ala141 shows a compositional bias: basic and acidic residues. Acidic residues-rich tracts occupy residues Glu142–Glu152, Glu163–Leu204, and Glu212–Ile233. The span at Val248–Val292 shows a compositional bias: low complexity. Residues Thr293–Glu304 are compositionally biased toward acidic residues.

The protein resides in the nucleus. Its subcellular location is the chromosome. The polypeptide is Chromo domain-containing protein cec-1 (cec-1) (Caenorhabditis elegans).